Consider the following 470-residue polypeptide: MNPNQKIITIGSICMTIGTISLILQIGNIISIWISHSIQTGSQNHTGICNQRIITYENNTWVNQTYVNISNTNVVAGKDTTSMILAGNSSLCPIRGWAIYSKDNSIRIGSKGDVFVIREPFISCSHLECRTFFLTQGALLNDKHSNGTVKDRSPYRALMSCPIGEAPSPYNSRFESVAWSASACHDGMGWLTIGISGPDDGAVAVLKYNGIITEIIKSWRKQILRTQESECVCVNGSCFTIMTDGPSDGPASYRIFKIEKGKITKSIELDAPNSHYEECSCYPDTGKVMCVCRDNWHGSNRPWVSFNQNLDYQIGYICSGVFGDNPRPKDGKGSCDPVNVDGADGVKGFSYRYGDGVWIGRTKSNSSRKGFEMIWDPNGWTDTDDNFLVKQDVVAMTDWSGYSGSFVQHPELTGLDCMRPCFWVELIRGRPREKTTIWTSGSSISFCGVNSDTVNWSWPDGAELPFTIDM.

The Intravirion segment spans residues 1 to 6; sequence MNPNQK. The chain crosses the membrane as a helical span at residues 7–27; sequence IITIGSICMTIGTISLILQIG. Residues 11 to 33 are involved in apical transport and lipid raft association; it reads GSICMTIGTISLILQIGNIISIW. Residues 28–470 lie on the Virion surface side of the membrane; that stretch reads NIISIWISHS…GAELPFTIDM (443 aa). The segment at 36–90 is hypervariable stalk region; sequence HSIQTGSQNHTGICNQRIITYENNTWVNQTYVNISNTNVVAGKDTTSMILAGNSS. Residues Asn44, Asn58, Asn63, Asn68, and Asn88 are each glycosylated (N-linked (GlcNAc...) asparagine; by host). A head of neuraminidase region spans residues 91-470; sequence LCPIRGWAIY…GAELPFTIDM (380 aa). 8 disulfide bridges follow: Cys92–Cys417, Cys124–Cys129, Cys184–Cys231, Cys233–Cys238, Cys279–Cys292, Cys281–Cys290, Cys318–Cys335, and Cys421–Cys447. Residue Arg118 participates in substrate binding. An N-linked (GlcNAc...) asparagine; by host glycan is attached at Asn146. The active-site Proton donor/acceptor is the Asp151. Arg152 is a substrate binding site. N-linked (GlcNAc...) asparagine; by host glycosylation occurs at Asn235. 277 to 278 provides a ligand contact to substrate; sequence EE. Arg293 serves as a coordination point for substrate. Ca(2+) contacts are provided by Asp294, Gly298, and Asp324. A glycan (N-linked (GlcNAc...) asparagine; by host) is linked at Asn365. Residue Arg368 coordinates substrate. The active-site Nucleophile is the Tyr402. The N-linked (GlcNAc...) asparagine; by host glycan is linked to Asn455.

Belongs to the glycosyl hydrolase 34 family. In terms of assembly, homotetramer. The cofactor is Ca(2+). In terms of processing, N-glycosylated.

The protein localises to the virion membrane. It is found in the host apical cell membrane. It carries out the reaction Hydrolysis of alpha-(2-&gt;3)-, alpha-(2-&gt;6)-, alpha-(2-&gt;8)- glycosidic linkages of terminal sialic acid residues in oligosaccharides, glycoproteins, glycolipids, colominic acid and synthetic substrates.. Inhibited by the neuraminidase inhibitors zanamivir (Relenza) and oseltamivir (Tamiflu). These drugs interfere with the release of progeny virus from infected cells and are effective against all influenza strains. Resistance to neuraminidase inhibitors is quite rare. Catalyzes the removal of terminal sialic acid residues from viral and cellular glycoconjugates. Cleaves off the terminal sialic acids on the glycosylated HA during virus budding to facilitate virus release. Additionally helps virus spread through the circulation by further removing sialic acids from the cell surface. These cleavages prevent self-aggregation and ensure the efficient spread of the progeny virus from cell to cell. Otherwise, infection would be limited to one round of replication. Described as a receptor-destroying enzyme because it cleaves a terminal sialic acid from the cellular receptors. May facilitate viral invasion of the upper airways by cleaving the sialic acid moieties on the mucin of the airway epithelial cells. Likely to plays a role in the budding process through its association with lipid rafts during intracellular transport. May additionally display a raft-association independent effect on budding. Plays a role in the determination of host range restriction on replication and virulence. Sialidase activity in late endosome/lysosome traffic seems to enhance virus replication. The protein is Neuraminidase of Influenza A virus (strain A/Malaysia:Malaya/302/1954 H1N1).